The primary structure comprises 456 residues: Probable glycine dehydrogenase (decarboxylating) subunit 1 (456 aa).

It belongs to the GcvP family. N-terminal subunit subfamily. As to quaternary structure, the glycine cleavage system is composed of four proteins: P, T, L and H. In this organism, the P 'protein' is a heterodimer of two subunits.

It catalyses the reaction N(6)-[(R)-lipoyl]-L-lysyl-[glycine-cleavage complex H protein] + glycine + H(+) = N(6)-[(R)-S(8)-aminomethyldihydrolipoyl]-L-lysyl-[glycine-cleavage complex H protein] + CO2. Its function is as follows. The glycine cleavage system catalyzes the degradation of glycine. The P protein binds the alpha-amino group of glycine through its pyridoxal phosphate cofactor; CO(2) is released and the remaining methylamine moiety is then transferred to the lipoamide cofactor of the H protein. This chain is Probable glycine dehydrogenase (decarboxylating) subunit 1, found in Rhizorhabdus wittichii (strain DSM 6014 / CCUG 31198 / JCM 15750 / NBRC 105917 / EY 4224 / RW1) (Sphingomonas wittichii).